The sequence spans 249 residues: Type III pantothenate kinase (249 aa).

ATP is bound at residue 6-13; the sequence is DCGNSFIK. Substrate is bound by residues Y93 and 100 to 103; that span reads GMDR. The active-site Proton acceptor is D102. Residue D122 coordinates K(+). T125 contacts ATP. Residue T181 coordinates substrate.

This sequence belongs to the type III pantothenate kinase family. As to quaternary structure, homodimer. NH4(+) serves as cofactor. The cofactor is K(+).

The protein localises to the cytoplasm. The catalysed reaction is (R)-pantothenate + ATP = (R)-4'-phosphopantothenate + ADP + H(+). Its pathway is cofactor biosynthesis; coenzyme A biosynthesis; CoA from (R)-pantothenate: step 1/5. Functionally, catalyzes the phosphorylation of pantothenate (Pan), the first step in CoA biosynthesis. This is Type III pantothenate kinase from Pseudomonas putida (strain ATCC 47054 / DSM 6125 / CFBP 8728 / NCIMB 11950 / KT2440).